A 157-amino-acid polypeptide reads, in one-letter code: SsrA-binding protein (157 aa).

Residues 131–157 (KQLHDKRDTEKKRDWSREKGRIMRARG) form a disordered region. The span at 132-151 (QLHDKRDTEKKRDWSREKGR) shows a compositional bias: basic and acidic residues.

It belongs to the SmpB family.

The protein resides in the cytoplasm. Functionally, required for rescue of stalled ribosomes mediated by trans-translation. Binds to transfer-messenger RNA (tmRNA), required for stable association of tmRNA with ribosomes. tmRNA and SmpB together mimic tRNA shape, replacing the anticodon stem-loop with SmpB. tmRNA is encoded by the ssrA gene; the 2 termini fold to resemble tRNA(Ala) and it encodes a 'tag peptide', a short internal open reading frame. During trans-translation Ala-aminoacylated tmRNA acts like a tRNA, entering the A-site of stalled ribosomes, displacing the stalled mRNA. The ribosome then switches to translate the ORF on the tmRNA; the nascent peptide is terminated with the 'tag peptide' encoded by the tmRNA and targeted for degradation. The ribosome is freed to recommence translation, which seems to be the essential function of trans-translation. The sequence is that of SsrA-binding protein from Rhodopseudomonas palustris (strain BisB18).